Reading from the N-terminus, the 309-residue chain is MVKVYAPASSANMSVGFDVLGAAVTPVDGTLLGDVVSVEAADHFRLHNLGRFADKLPPEPRENIVYQCWERFCQALGKTIPVAMTLEKNMPIGSGLGSSACSVAAALVAMNEHCGKPLNDTRLLALMGELEGRISGSIHYDNVAPCFLGGMQLMIEENGIISQQVPGFDEWLWVLAYPGIKVSTAEARAILPAQYRRQDCIAHGRHLAGFIHACYSRQPQLAAALMKDVIAEPYRARLLPGFSQARQAVSEIGALASGISGSGPTLFALCDKPETAQRVADWLSKHYLQNQEGFVHICRLDTAGARVVG.

91 to 101 lines the ATP pocket; the sequence is PIGSGLGSSAC.

It belongs to the GHMP kinase family. Homoserine kinase subfamily.

The protein resides in the cytoplasm. It carries out the reaction L-homoserine + ATP = O-phospho-L-homoserine + ADP + H(+). It participates in amino-acid biosynthesis; L-threonine biosynthesis; L-threonine from L-aspartate: step 4/5. Functionally, catalyzes the ATP-dependent phosphorylation of L-homoserine to L-homoserine phosphate. This chain is Homoserine kinase, found in Salmonella paratyphi B (strain ATCC BAA-1250 / SPB7).